The following is a 227-amino-acid chain: MSSRDSAASEITPEVLLRAYACGIFPMAESADDPGLFWVEPEQRGIFPLEALRISSRLARTVRSDRYRITIDTAFERVLGECAAPAPGREDTWINNRIRKLYSGLFEIGHCHSIEAWDGDDLAGGLYGVSLGGAFFGESMFHRSRDTSKVALVHLAARLIIGGFTLLDTQFVTDHLRSLGATEVPRRKYRALLDRALQLPGDFFALPADRPVSGADVLAIVRGTTAT.

The protein belongs to the L/F-transferase family.

Its subcellular location is the cytoplasm. It catalyses the reaction N-terminal L-lysyl-[protein] + L-leucyl-tRNA(Leu) = N-terminal L-leucyl-L-lysyl-[protein] + tRNA(Leu) + H(+). The catalysed reaction is N-terminal L-arginyl-[protein] + L-leucyl-tRNA(Leu) = N-terminal L-leucyl-L-arginyl-[protein] + tRNA(Leu) + H(+). The enzyme catalyses L-phenylalanyl-tRNA(Phe) + an N-terminal L-alpha-aminoacyl-[protein] = an N-terminal L-phenylalanyl-L-alpha-aminoacyl-[protein] + tRNA(Phe). Functionally, functions in the N-end rule pathway of protein degradation where it conjugates Leu, Phe and, less efficiently, Met from aminoacyl-tRNAs to the N-termini of proteins containing an N-terminal arginine or lysine. The protein is Leucyl/phenylalanyl-tRNA--protein transferase of Afipia carboxidovorans (strain ATCC 49405 / DSM 1227 / KCTC 32145 / OM5) (Oligotropha carboxidovorans).